Reading from the N-terminus, the 336-residue chain is Potassium channel subfamily K member 1 (336 aa).

At 1 to 20 (MLQSLAGSSCVRLVERHRSA) the chain is on the cytoplasmic side. Residues 21–41 (WCFGFLVLGYLLYLVFGAVVF) form a helical membrane-spanning segment. Topologically, residues 42-103 (SSVELPYEDL…SNASGNWNWD (62 aa)) are extracellular. The N-linked (GlcNAc...) asparagine glycan is linked to Asn-95. An intramembrane region (helical) is located at residues 104–116 (FASALFFASTVLS). An intramembrane segment occupies 117-122 (TTGYGH). The segment at 117–122 (TTGYGH) is selectivity filter 1. Topologically, residues 123–132 (TVPLSDGGKA) are extracellular. A helical membrane pass occupies residues 133–156 (FCIIYSVIGIPFTLLFLTAVVQRV). Residues 157 to 181 (TVHVTRRPVLYFHVRWGFSKQVVAI) are Cytoplasmic-facing. A helical transmembrane segment spans residues 182-202 (VHAVLLGLITVSCFFFIPAAV). Over 203–211 (FSVLEDDWN) the chain is Extracellular. The segment at residues 212-224 (FLESFYFCFISLS) is an intramembrane region (helical). The tract at residues 225-230 (TIGLGD) is selectivity filter 2. An intramembrane segment occupies 225–231 (TIGLGDY). Topologically, residues 232–243 (VPGEGYNQKFRE) are extracellular. Residues 244–267 (LYKIGITCYLLLGLIAMLVVLETF) traverse the membrane as a helical segment. At 268-336 (CELHELKKFR…SACADGPANH (69 aa)) the chain is on the cytoplasmic side. Lys-274 is covalently cross-linked (Glycyl lysine isopeptide (Lys-Gly) (interchain with G-Cter in SUMO)). The tract at residues 293 to 299 (IIEHDQL) is important for intracellular retention in recycling endosomes. The interval 315–336 (QKQNEPFVATPSSACADGPANH) is disordered. Ser-326 is modified (phosphoserine).

It belongs to the two pore domain potassium channel (TC 1.A.1.8) family. In terms of assembly, homodimer; disulfide-linked. Heterodimer with KCNK2; disulfide-linked. In astrocytes, forms mostly heterodimeric potassium channels with KCNK2, with only a minor proportion of functional channels containing homodimeric KCNK1. Interacts with KCNK3 and KCNK9, forming functional heterodimeric channels. Interacts with GNG4. Identified in a complex with PSD and ARF6; interacts only with PSD that is bound to ARF6. Interacts with UBE2I. In terms of processing, sumoylation is controversial. Sumoylated by UBE2I. Not sumoylated when expressed in xenopus oocytes or mammalian cells. Sumoylation inactivates the channel, but does not interfere with expression at the cell membrane. Sumoylation of a single subunit is sufficient to silence the dimeric channel. Sumoylation of KCNK1 is sufficient to silence heterodimeric channels formed by KCNK1 and KCNK3 or KCNK9. Desumoylated by SENP1; this activates the channel. Desumoylated by SENP1; this strongly increases halothane-mediated activation of heterodimeric channels formed with KCNK9. SENP1 treatment has no effect. Expressed in renal distal tubules, especially in cortical collecting duct and cortical thick ascending limb, with lower levels in the connecting tubule.

It localises to the cell membrane. The protein localises to the recycling endosome. The protein resides in the synaptic cell membrane. Its subcellular location is the cytoplasmic vesicle. It is found in the perikaryon. It localises to the cell projection. The protein localises to the dendrite. The protein resides in the apical cell membrane. The enzyme catalyses K(+)(in) = K(+)(out). It catalyses the reaction NH4(+)(in) = NH4(+)(out). It carries out the reaction Na(+)(in) = Na(+)(out). The catalysed reaction is Rb(+)(in) = Rb(+)(out). The enzyme catalyses Cs(+)(in) = Cs(+)(out). It catalyses the reaction Li(+)(in) = Li(+)(out). It carries out the reaction L-glutamate(out) = L-glutamate(in). The catalysed reaction is chloride(in) = chloride(out). Its function is as follows. Ion channel that contributes to passive transmembrane potassium transport and to the regulation of the resting membrane potential in brain astrocytes, but also in kidney and in other tissues. Forms dimeric channels through which potassium ions pass in accordance with their electrochemical gradient. The channel is selective for K(+) ions at physiological potassium concentrations and at neutral pH, but becomes permeable to Na(+) at subphysiological K(+) levels and upon acidification of the extracellular medium. The homodimer has very low potassium channel activity, when expressed in heterologous systems, and can function as weakly inward rectifying potassium channel. Channel activity is modulated by activation of serotonin receptors. Heterodimeric channels containing KCNK1 and KCNK2 have much higher activity, and may represent the predominant form in astrocytes. Heterodimeric channels containing KCNK1 and KCNK3 or KCNK9 have much higher activity. Heterodimeric channels formed by KCNK1 and KCNK9 may contribute to halothane-sensitive currents. Mediates outward rectifying potassium currents in dentate gyrus granule cells and contributes to the regulation of their resting membrane potential. Contributes to the regulation of action potential firing in dentate gyrus granule cells and down-regulates their intrinsic excitability. In astrocytes, the heterodimer formed by KCNK1 and KCNK2 is required for rapid glutamate release in response to activation of G-protein coupled receptors, such as F2R and CNR1. Required for normal ion and water transport in the kidney. Contributes to the regulation of the resting membrane potential of pancreatic beta cells. The low channel activity of homodimeric KCNK1 may be due to sumoylation. The low channel activity may be due to rapid internalization from the cell membrane and retention in recycling endosomes. Permeable to monovalent cations with ion selectivity for K(+) &gt; Rb(+) &gt;&gt; NH4(+) &gt;&gt; Cs(+) = Na(+) = Li(+). In Oryctolagus cuniculus (Rabbit), this protein is Potassium channel subfamily K member 1.